The chain runs to 148 residues: Deoxyuridine 5'-triphosphate nucleotidohydrolase (148 aa).

Substrate contacts are provided by residues 67–69 (RSG), asparagine 80, 84–86 (LID), and methionine 94.

The protein belongs to the dUTPase family. Requires Mg(2+) as cofactor.

It catalyses the reaction dUTP + H2O = dUMP + diphosphate + H(+). It functions in the pathway pyrimidine metabolism; dUMP biosynthesis; dUMP from dCTP (dUTP route): step 2/2. Functionally, this enzyme is involved in nucleotide metabolism: it produces dUMP, the immediate precursor of thymidine nucleotides and it decreases the intracellular concentration of dUTP so that uracil cannot be incorporated into DNA. The polypeptide is Deoxyuridine 5'-triphosphate nucleotidohydrolase (Burkholderia mallei (strain NCTC 10247)).